The following is a 286-amino-acid chain: UPF0761 membrane protein KPK_5501 (286 aa).

A run of 7 helical transmembrane segments spans residues 44-64 (LLSL…FPMF), 74-94 (FIFA…IEQF), 104-124 (VGAF…DSAL), 140-160 (FAVY…SLAI), 183-203 (LFPL…VPTT), 210-230 (AVIG…AFAL), and 244-264 (VISV…IVLL).

Belongs to the UPF0761 family.

The protein localises to the cell inner membrane. In Klebsiella pneumoniae (strain 342), this protein is UPF0761 membrane protein KPK_5501.